The primary structure comprises 663 residues: Transmembrane 9 superfamily member 2 (663 aa).

Residues 1–28 (MSSRPPASLPARGPRLLLLSLLLLGTVP) form the signal peptide. Over 29–300 (GPRPGSAFYL…LESMPHTHIQ (272 aa)) the chain is Lumenal. The helical transmembrane segment at 301–321 (WFSIMNSLVIVLFLSGMVAMI) threads the bilayer. Over 322–374 (MLRTLHKDIARYNQMDSTEDAQEEFGWKLVHGDIFRPPRKGMLLSVFLGSGTQ) the chain is Cytoplasmic. A helical membrane pass occupies residues 375 to 395 (ILIMTFVTLFFACLGFLSPAN). Residues 396–398 (RGA) lie on the Lumenal side of the membrane. A helical transmembrane segment spans residues 399 to 419 (LMTCAVVLWVLLGTPAGYVAA). Over 420–437 (RFYKSFGGEKWKTNVLLT) the chain is Cytoplasmic. Residues 438-458 (SFLCPGIVFADFFIMNLILWG) form a helical membrane-spanning segment. Residues 459–466 (EGSSAAIP) are Lumenal-facing. Residues 467-487 (FGTLVAILALWFCISVPLTFI) traverse the membrane as a helical segment. The Cytoplasmic portion of the chain corresponds to 488–522 (GAYFGFKKNAIEHPVRTNQIPRQIPEQSFYTKPLP). The chain crosses the membrane as a helical span at residues 523-543 (GIIMGGILPFGCIFIQLFFIL). Residues 544 to 554 (NSIWSHQMYYM) are Lumenal-facing. A helical transmembrane segment spans residues 555-575 (FGFLFLVFIILVITCSEATIL). Over 576–591 (LCYFHLCAEDYHWQWR) the chain is Cytoplasmic. A helical membrane pass occupies residues 592 to 612 (SFLTSGFTAVYFLVYAIHYFF). Topologically, residues 613–631 (SKLQITGTASTILYFGYTM) are lumenal. A helical membrane pass occupies residues 632-652 (IMVLIFFLFTGTIGFFACFWF). Topologically, residues 653–663 (VTKIYSVVKVD) are cytoplasmic.

The protein belongs to the nonaspanin (TM9SF) (TC 9.A.2) family.

It is found in the endosome membrane. It localises to the golgi outpost. The protein localises to the cytoplasm. The protein resides in the cytoskeleton. Its subcellular location is the microtubule organizing center. Functionally, in the intracellular compartments, may function as a channel or small molecule transporter. This chain is Transmembrane 9 superfamily member 2 (Tm9sf2), found in Rattus norvegicus (Rat).